We begin with the raw amino-acid sequence, 340 residues long: Uroporphyrinogen decarboxylase (340 aa).

Substrate-binding positions include 21 to 25 (RQAGR), Asp71, Tyr148, Ser203, and His316.

The protein belongs to the uroporphyrinogen decarboxylase family. Homodimer.

It is found in the cytoplasm. The catalysed reaction is uroporphyrinogen III + 4 H(+) = coproporphyrinogen III + 4 CO2. It functions in the pathway porphyrin-containing compound metabolism; protoporphyrin-IX biosynthesis; coproporphyrinogen-III from 5-aminolevulinate: step 4/4. In terms of biological role, catalyzes the decarboxylation of four acetate groups of uroporphyrinogen-III to yield coproporphyrinogen-III. The chain is Uroporphyrinogen decarboxylase from Campylobacter hominis (strain ATCC BAA-381 / DSM 21671 / CCUG 45161 / LMG 19568 / NCTC 13146 / CH001A).